We begin with the raw amino-acid sequence, 227 residues long: Cytidylate kinase (227 aa).

Residue 12–20 (GPSGAGKGT) participates in ATP binding.

The protein belongs to the cytidylate kinase family. Type 1 subfamily.

Its subcellular location is the cytoplasm. The catalysed reaction is CMP + ATP = CDP + ADP. It catalyses the reaction dCMP + ATP = dCDP + ADP. In Escherichia fergusonii (strain ATCC 35469 / DSM 13698 / CCUG 18766 / IAM 14443 / JCM 21226 / LMG 7866 / NBRC 102419 / NCTC 12128 / CDC 0568-73), this protein is Cytidylate kinase.